The sequence spans 378 residues: Cobalt-precorrin-5B C(1)-methyltransferase (378 aa).

This sequence belongs to the CbiD family.

The catalysed reaction is Co-precorrin-5B + S-adenosyl-L-methionine = Co-precorrin-6A + S-adenosyl-L-homocysteine. Its pathway is cofactor biosynthesis; adenosylcobalamin biosynthesis; cob(II)yrinate a,c-diamide from sirohydrochlorin (anaerobic route): step 6/10. In terms of biological role, catalyzes the methylation of C-1 in cobalt-precorrin-5B to form cobalt-precorrin-6A. In Synechocystis sp. (strain ATCC 27184 / PCC 6803 / Kazusa), this protein is Cobalt-precorrin-5B C(1)-methyltransferase.